The following is a 135-amino-acid chain: Large ribosomal subunit protein eL32 (135 aa).

Positions 51–77 (GRDNKFRLKMKGKPRPPEPGYRSPRKV) are disordered.

Belongs to the eukaryotic ribosomal protein eL32 family.

The protein is Large ribosomal subunit protein eL32 (rpl32e) of Nanoarchaeum equitans (strain Kin4-M).